We begin with the raw amino-acid sequence, 127 residues long: Small ribosomal subunit protein uS13 (127 aa).

The protein belongs to the universal ribosomal protein uS13 family. As to quaternary structure, part of the 30S ribosomal subunit. Forms a loose heterodimer with protein S19. Forms two bridges to the 50S subunit in the 70S ribosome.

Functionally, located at the top of the head of the 30S subunit, it contacts several helices of the 16S rRNA. In the 70S ribosome it contacts the 23S rRNA (bridge B1a) and protein L5 of the 50S subunit (bridge B1b), connecting the 2 subunits; these bridges are implicated in subunit movement. Contacts the tRNAs in the A and P-sites. This chain is Small ribosomal subunit protein uS13, found in Roseiflexus sp. (strain RS-1).